Reading from the N-terminus, the 711-residue chain is Long-chain-fatty-acid--CoA ligase 4 (711 aa).

Residues 8-28 form a helical; Signal-anchor for type III membrane protein membrane-spanning segment; that stretch reads LTIILLPVHLLITIYSALIFI. Over 29–711 the chain is Cytoplasmic; that stretch reads PWYFLTNAKK…KDIERMYGGK (683 aa). Ser-447 is modified (phosphoserine).

Belongs to the ATP-dependent AMP-binding enzyme family. Mg(2+) serves as cofactor.

It is found in the mitochondrion outer membrane. Its subcellular location is the peroxisome membrane. The protein localises to the microsome membrane. It localises to the endoplasmic reticulum membrane. The protein resides in the cell membrane. It catalyses the reaction a long-chain fatty acid + ATP + CoA = a long-chain fatty acyl-CoA + AMP + diphosphate. The catalysed reaction is (5Z,8Z,11Z,14Z)-eicosatetraenoate + ATP + CoA = (5Z,8Z,11Z,14Z)-eicosatetraenoyl-CoA + AMP + diphosphate. It carries out the reaction hexadecanoate + ATP + CoA = hexadecanoyl-CoA + AMP + diphosphate. The enzyme catalyses (E)-hexadec-2-enoate + ATP + CoA = (2E)-hexadecenoyl-CoA + AMP + diphosphate. It catalyses the reaction 15-hydroxy-(5Z,8Z,11Z,13E)-eicosatetraenoate + ATP + CoA = 15-hydroxy-(5Z,8Z,11Z,13E)-eicosatetraenoyl-CoA + AMP + diphosphate. The catalysed reaction is 12-hydroxy-(5Z,8Z,10E,14Z)-eicosatetraenoate + ATP + CoA = 12-hydroxy-(5Z,8Z,10E,14Z)-eicosatetraenoyl-CoA + AMP + diphosphate. It carries out the reaction 5-hydroxy-(6E,8Z,11Z,14Z)-eicosatetraenoate + ATP + CoA = 5-hydroxy-(6E,8Z,11Z,14Z)-eicosatetraenoyl-CoA + AMP + diphosphate. The enzyme catalyses 5,6-epoxy-(8Z,11Z,14Z)-eicosatrienoate + ATP + CoA = 5,6-epoxy-(8Z,11Z,14Z)-eicosatrienoyl-CoA + AMP + diphosphate. It catalyses the reaction 14,15-epoxy-(5Z,8Z,11Z)-eicosatrienoate + ATP + CoA = 14,15-epoxy-(5Z,8Z,11Z)-eicosatrienoyl-CoA + AMP + diphosphate. The catalysed reaction is 11,12-epoxy-(5Z,8Z,14Z)-eicosatrienoate + ATP + CoA = 11,12-epoxy-(5Z,8Z,14Z)-eicosatrienoyl-CoA + AMP + diphosphate. It carries out the reaction 8,9-epoxy-(5Z,11Z,14Z)-eicosatrienoate + ATP + CoA = 8,9-epoxy-(5Z,11Z,14Z)-eicosatrienoyl-CoA + AMP + diphosphate. Its activity is regulated as follows. Both triacsin C and rosiglitazone inhibit arachidonoyl-CoA ligase activity. Its function is as follows. Catalyzes the conversion of long-chain fatty acids to their active form acyl-CoA for both synthesis of cellular lipids, and degradation via beta-oxidation. Preferentially activates arachidonate and eicosapentaenoate as substrates. Preferentially activates 8,9-EET &gt; 14,15-EET &gt; 5,6-EET &gt; 11,12-EET. Modulates glucose-stimulated insulin secretion by regulating the levels of unesterified EETs. Modulates prostaglandin E2 secretion. The protein is Long-chain-fatty-acid--CoA ligase 4 (ACSL4) of Homo sapiens (Human).